We begin with the raw amino-acid sequence, 776 residues long: Photosystem I P700 chlorophyll a apoprotein A1 (776 aa).

8 consecutive transmembrane segments (helical) span residues 76-99 (IFSA…FHGA), 162-185 (LMAL…FHYH), 201-225 (LQHH…HVAN), 309-327 (VAHH…GHVY), 368-391 (WHAQ…HHMY), 407-433 (LGLF…IAVI), 455-477 (AIIS…LYIH), and 557-575 (LMIH…LILL). C599 and C608 together coordinate [4Fe-4S] cluster. 2 helical membrane-spanning segments follow: residues 615–636 (HVFL…YFSW) and 690–712 (LSGY…MFLF). H701 provides a ligand contact to divinylchlorophyll a'. 2 residues coordinate divinyl chlorophyll a: M709 and Y717. W718 contacts phylloquinone. Residues 750-770 (AVGVTHFLFGGIVTTWAFFHA) traverse the membrane as a helical segment.

The protein belongs to the PsaA/PsaB family. The PsaA/B heterodimer binds the P700 chlorophyll special pair and subsequent electron acceptors. PSI consists of a core antenna complex that captures photons, and an electron transfer chain that converts photonic excitation into a charge separation. The cyanobacterial PSI reaction center is composed of one copy each of PsaA,B,C,D,E,F,I,J,K,L,M and X, and forms trimeric complexes. Requires PSI electron transfer chain: 5 divinyl chlorophyll a, 1 divinyl chlorophyll a', 2 phylloquinones and 3 4Fe-4S clusters. PSI core antenna: 90 divinyl chlorophyll a, 22 carotenoids, 3 phospholipids and 1 galactolipid. P700 is a divinyl chlorophyll a/divinyl chlorophyll a' dimer, A0 is one or more chlorophyll divinyl a, A1 is one or both phylloquinones and FX is a shared 4Fe-4S iron-sulfur center. as cofactor.

It is found in the cellular thylakoid membrane. It carries out the reaction reduced [plastocyanin] + hnu + oxidized [2Fe-2S]-[ferredoxin] = oxidized [plastocyanin] + reduced [2Fe-2S]-[ferredoxin]. Its function is as follows. PsaA and PsaB bind P700, the primary electron donor of photosystem I (PSI), as well as the electron acceptors A0, A1 and FX. PSI is a plastocyanin/cytochrome c6-ferredoxin oxidoreductase, converting photonic excitation into a charge separation, which transfers an electron from the donor P700 chlorophyll pair to the spectroscopically characterized acceptors A0, A1, FX, FA and FB in turn. Oxidized P700 is reduced on the lumenal side of the thylakoid membrane by plastocyanin or cytochrome c6. The chain is Photosystem I P700 chlorophyll a apoprotein A1 from Prochlorococcus marinus (strain MIT 9313).